We begin with the raw amino-acid sequence, 308 residues long: Cyclin-D4-1 (308 aa).

Belongs to the cyclin family. Cyclin D subfamily. Interacts with CDKA-1, CDKB2-1, KRP4/ICK7, KRP5/ICK3, KRP6/ICK4 and KRP7/ICK5. In terms of tissue distribution, expressed in shoot apical meristem, leaf primordia vascular tissues and tapetum of anthers.

Functionally, may activate cell cycle in the root apical meristem (RAM) and promote embryonic root (radicle) protrusion. In Arabidopsis thaliana (Mouse-ear cress), this protein is Cyclin-D4-1 (CYCD4-1).